A 489-amino-acid chain; its full sequence is Cysteine--tRNA ligase (489 aa).

Zn(2+) is bound at residue Cys29. The short motif at 31 to 41 is the 'HIGH' region element; that stretch reads VTVYDYCHLGH. 3 residues coordinate Zn(2+): Cys215, His240, and Glu244. Residues 272-276 carry the 'KMSKS' region motif; that stretch reads KMSKS. Residue Lys275 coordinates ATP.

This sequence belongs to the class-I aminoacyl-tRNA synthetase family. In terms of assembly, monomer. Zn(2+) is required as a cofactor.

It localises to the cytoplasm. It carries out the reaction tRNA(Cys) + L-cysteine + ATP = L-cysteinyl-tRNA(Cys) + AMP + diphosphate. In Trichodesmium erythraeum (strain IMS101), this protein is Cysteine--tRNA ligase.